The following is a 467-amino-acid chain: ATP synthase subunit beta (467 aa).

156 to 163 contributes to the ATP binding site; it reads GGAGVGKT.

It belongs to the ATPase alpha/beta chains family. In terms of assembly, F-type ATPases have 2 components, CF(1) - the catalytic core - and CF(0) - the membrane proton channel. CF(1) has five subunits: alpha(3), beta(3), gamma(1), delta(1), epsilon(1). CF(0) has three main subunits: a(1), b(2) and c(9-12). The alpha and beta chains form an alternating ring which encloses part of the gamma chain. CF(1) is attached to CF(0) by a central stalk formed by the gamma and epsilon chains, while a peripheral stalk is formed by the delta and b chains.

It is found in the cell membrane. The enzyme catalyses ATP + H2O + 4 H(+)(in) = ADP + phosphate + 5 H(+)(out). In terms of biological role, produces ATP from ADP in the presence of a proton gradient across the membrane. The catalytic sites are hosted primarily by the beta subunits. The chain is ATP synthase subunit beta from Cytobacillus firmus (Bacillus firmus).